A 327-amino-acid polypeptide reads, in one-letter code: Thiamine thiazole synthase (327 aa).

Residues C86, 107–108, G115, and V182 each bind substrate; that span reads EA. The residue at position 216 (C216) is a 2,3-didehydroalanine (Cys). Substrate contacts are provided by residues D218, H233, M285, and 295 to 297; that span reads RMG.

It belongs to the THI4 family. Homooctamer. Fe cation serves as cofactor. During the catalytic reaction, a sulfide is transferred from Cys-216 to a reaction intermediate, generating a dehydroalanine residue.

Its subcellular location is the cytoplasm. The protein resides in the nucleus. The enzyme catalyses [ADP-thiazole synthase]-L-cysteine + glycine + NAD(+) = [ADP-thiazole synthase]-dehydroalanine + ADP-5-ethyl-4-methylthiazole-2-carboxylate + nicotinamide + 3 H2O + 2 H(+). Involved in biosynthesis of the thiamine precursor thiazole. Catalyzes the conversion of NAD and glycine to adenosine diphosphate 5-(2-hydroxyethyl)-4-methylthiazole-2-carboxylic acid (ADT), an adenylated thiazole intermediate. The reaction includes an iron-dependent sulfide transfer from a conserved cysteine residue of the protein to a thiazole intermediate. The enzyme can only undergo a single turnover, which suggests it is a suicide enzyme. May have additional roles in adaptation to various stress conditions and in DNA damage tolerance. This chain is Thiamine thiazole synthase, found in Aspergillus oryzae (strain ATCC 42149 / RIB 40) (Yellow koji mold).